The following is a 117-amino-acid chain: MDKKAARIRRATRARRKLQELGATRLVVHRTPRHIYAQVIAPNGSEVLVAASTVEKAIAEQLKSTGNKDAATAIGKAIAERALEKGIKNVSFDRSGFQYHGRVQALADAAREAGLQF.

Belongs to the universal ribosomal protein uL18 family. In terms of assembly, part of the 50S ribosomal subunit; part of the 5S rRNA/L5/L18/L25 subcomplex. Contacts the 5S and 23S rRNAs.

Its function is as follows. This is one of the proteins that bind and probably mediate the attachment of the 5S RNA into the large ribosomal subunit, where it forms part of the central protuberance. This is Large ribosomal subunit protein uL18 from Pectobacterium atrosepticum (strain SCRI 1043 / ATCC BAA-672) (Erwinia carotovora subsp. atroseptica).